We begin with the raw amino-acid sequence, 165 residues long: Nucleotide-binding protein NATL1_05371 (165 aa).

This sequence belongs to the YajQ family.

In terms of biological role, nucleotide-binding protein. This is Nucleotide-binding protein NATL1_05371 from Prochlorococcus marinus (strain NATL1A).